A 93-amino-acid polypeptide reads, in one-letter code: Alpha-defensin 1 (93 aa).

The N-terminal stretch at 1-19 is a signal peptide; that stretch reads MKKLVLLFALVLLGFQVQA. A propeptide spanning residues 20 to 58 is cleaved from the precursor; that stretch reads DSIQNTDEETKTEEQPGEEDQAVSVSFGDPEGTSLQEES. Residues 24–54 are disordered; the sequence is NTDEETKTEEQPGEEDQAVSVSFGDPEGTSL. Disulfide bonds link cysteine 64/cysteine 92, cysteine 66/cysteine 81, and cysteine 71/cysteine 91.

The protein belongs to the alpha-defensin family. As to expression, paneth cells of the small bowel.

The protein localises to the secreted. Probably contributes to the antimicrobial barrier function of the small bowel mucosa. Has antibacterial activity against attenuated mutants of S.typhimurium. In Mus musculus (Mouse), this protein is Alpha-defensin 1 (Defa1).